The following is a 426-amino-acid chain: 3-phosphoshikimate 1-carboxyvinyltransferase (426 aa).

3-phosphoshikimate contacts are provided by Lys-22, Ser-23, and Arg-27. Lys-22 is a phosphoenolpyruvate binding site. Gly-96 and Arg-124 together coordinate phosphoenolpyruvate. 3-phosphoshikimate contacts are provided by Ser-170, Ser-171, Gln-172, Ser-198, Asp-314, Asn-337, and Lys-341. Phosphoenolpyruvate is bound at residue Gln-172. The active-site Proton acceptor is the Asp-314. Phosphoenolpyruvate contacts are provided by Arg-345, Arg-387, and Lys-412.

This sequence belongs to the EPSP synthase family. In terms of assembly, monomer.

The protein localises to the cytoplasm. It catalyses the reaction 3-phosphoshikimate + phosphoenolpyruvate = 5-O-(1-carboxyvinyl)-3-phosphoshikimate + phosphate. It functions in the pathway metabolic intermediate biosynthesis; chorismate biosynthesis; chorismate from D-erythrose 4-phosphate and phosphoenolpyruvate: step 6/7. In terms of biological role, catalyzes the transfer of the enolpyruvyl moiety of phosphoenolpyruvate (PEP) to the 5-hydroxyl of shikimate-3-phosphate (S3P) to produce enolpyruvyl shikimate-3-phosphate and inorganic phosphate. The chain is 3-phosphoshikimate 1-carboxyvinyltransferase from Vibrio cholerae serotype O1 (strain ATCC 39541 / Classical Ogawa 395 / O395).